Reading from the N-terminus, the 490-residue chain is RNA-binding post-transcriptional regulator cip1 (490 aa).

3 disordered regions span residues 16–63, 76–97, and 138–199; these read RGLA…GSSA, ASSRAASPAPSDSFPTFGYSQL, and HNVS…GEDT. Polar residues predominate over residues 34–62; the sequence is RLQSPLNSPKLQPIGSPQASRKTSGSGSS. Phosphoserine occurs at positions 37, 41, 49, 86, and 141. 2 stretches are compositionally biased toward low complexity: residues 76–88 and 141–160; these read ASSRAASPAPSDS and SPPSGAESSSESKSFSASGK. Polar residues predominate over residues 164 to 192; sequence ADTSAEPSLDAFNSTQIKAGSTANSNSTP. Residues 202-280 enclose the RRM domain; that stretch reads TAIVVKNIPF…RRLRVEWKRQ (79 aa). Ser-397, Ser-401, and Ser-427 each carry phosphoserine. Phosphothreonine is present on Thr-431. Ser-435, Ser-456, and Ser-466 each carry phosphoserine. Positions 457 to 490 are disordered; it reads PLQKASTLSSPFNSKNDNDASTSASKQSFGVSHF.

Interacts with csx1. In terms of processing, phosphorylated by sty1.

It localises to the cytoplasm. Functionally, regulates global gene expression after oxidative stress. Interacts and stabilizes mRNAs and may regulate their transition between different cytoplasmic components after oxidative stress. This is RNA-binding post-transcriptional regulator cip1 (cip1) from Schizosaccharomyces pombe (strain 972 / ATCC 24843) (Fission yeast).